The following is a 184-amino-acid chain: Signal peptidase complex catalytic subunit SEC11 (184 aa).

Residues 1 to 28 (MDFIKEQYNSLVLDLRKTFRNKRDGLSH) are Cytoplasmic-facing. A helical; Signal-anchor for type II membrane protein transmembrane segment spans residues 29 to 49 (ILNVICLLLNALMIWKLLVVF). Over 50-184 (TGCESPVVVV…MLIMILMGYE (135 aa)) the chain is Lumenal. Catalysis depends on charge relay system residues Ser-63, His-101, and Asp-127. Residues 170 to 181 (AIVSIMLIMILM) are C-terminal short (CTS) helix.

It belongs to the peptidase S26B family. Component of the signal peptidase complex (SPC) composed of a catalytic subunit SEC11/SPC21 and three accessory subunits SPC25, SPC3/SPC22, SPC1/SPC12. Within the complex, interacts with SPC25. The complex induces a local thinning of the ER membrane which is used to measure the length of the signal peptide (SP) h-region of protein substrates. This ensures the selectivity of the complex towards h-regions shorter than 18-20 amino acids. The complex interacts with the SEC61 channel-forming translocon complex and is involved in the import of classical signal sequence-containing proteins. In terms of processing, phosphorylated. Phosphorylation increases catalytic activity.

It is found in the endoplasmic reticulum membrane. The catalysed reaction is Cleavage of hydrophobic, N-terminal signal or leader sequences from secreted and periplasmic proteins.. With respect to regulation, phosphorylation increases catalytic activity. Ca(2+) slightly increases catalytic activity in vitro. In terms of biological role, catalytic component of the signal peptidase complex (SPC) which catalyzes the cleavage of N-terminal signal sequences from nascent proteins as they are translocated into the lumen of the endoplasmic reticulum. Specifically cleaves N-terminal signal peptides that contain a hydrophobic alpha-helix (h-region) shorter than 18-20 amino acids. The chain is Signal peptidase complex catalytic subunit SEC11 from Plasmodium falciparum (isolate 3D7).